The sequence spans 298 residues: Formylmethanofuran--tetrahydromethanopterin formyltransferase (298 aa).

The protein belongs to the FTR family. In terms of assembly, homotetramer.

Its subcellular location is the cytoplasm. It carries out the reaction N-formylmethanofuran + 5,6,7,8-tetrahydromethanopterin + H(+) = N(5)-formyl-5,6,7,8-tetrahydromethanopterin + methanofuran. It participates in one-carbon metabolism; formaldehyde degradation; formate from formaldehyde (H(4)MPT route): step 4/5. Its function is as follows. Catalyzes the transfer of a formyl group from 5-formyl tetrahydromethanopterin (5-formyl-H(4)MPT) to methanofuran (MFR) to produce formylmethanofuran (formyl-MFR) and tetrahydromethanopterin (H(4)MPT). In Methylococcus capsulatus (strain ATCC 33009 / NCIMB 11132 / Bath), this protein is Formylmethanofuran--tetrahydromethanopterin formyltransferase.